The following is a 180-amino-acid chain: Ribulose bisphosphate carboxylase small subunit, chloroplastic (180 aa).

The N-terminal 56 residues, 1–56 (MASSVLSSAAVATRSNVAQANMVAPFTGLKSAASFPVSRKQNLDITSIASNGGRVQ), are a transit peptide targeting the chloroplast.

The protein belongs to the RuBisCO small chain family. In terms of assembly, heterohexadecamer of 8 large and 8 small subunits.

It localises to the plastid. It is found in the chloroplast. Functionally, ruBisCO catalyzes two reactions: the carboxylation of D-ribulose 1,5-bisphosphate, the primary event in carbon dioxide fixation, as well as the oxidative fragmentation of the pentose substrate. Both reactions occur simultaneously and in competition at the same active site. Although the small subunit is not catalytic it is essential for maximal activity. The sequence is that of Ribulose bisphosphate carboxylase small subunit, chloroplastic from Nicotiana plumbaginifolia (Leadwort-leaved tobacco).